The primary structure comprises 137 residues: uncharacterized protein (137 aa).

The next 2 membrane-spanning stretches (helical) occupy residues leucine 36–leucine 52 and phenylalanine 113–phenylalanine 129.

The protein resides in the membrane. This is an uncharacterized protein from Saccharomyces cerevisiae (strain ATCC 204508 / S288c) (Baker's yeast).